Consider the following 126-residue polypeptide: UPF0102 protein DNO_0639 (126 aa).

The protein belongs to the UPF0102 family.

The protein is UPF0102 protein DNO_0639 of Dichelobacter nodosus (strain VCS1703A).